A 419-amino-acid polypeptide reads, in one-letter code: UDP-N-acetylglucosamine 1-carboxyvinyltransferase 2 (419 aa).

Position 22–23 (22–23) interacts with phosphoenolpyruvate; the sequence is KN. Residue arginine 92 participates in UDP-N-acetyl-alpha-D-glucosamine binding. Cysteine 116 functions as the Proton donor in the catalytic mechanism. Cysteine 116 carries the 2-(S-cysteinyl)pyruvic acid O-phosphothioketal modification. Residues 121 to 125, aspartate 306, and isoleucine 328 each bind UDP-N-acetyl-alpha-D-glucosamine; that span reads RPIDL.

This sequence belongs to the EPSP synthase family. MurA subfamily.

Its subcellular location is the cytoplasm. It carries out the reaction phosphoenolpyruvate + UDP-N-acetyl-alpha-D-glucosamine = UDP-N-acetyl-3-O-(1-carboxyvinyl)-alpha-D-glucosamine + phosphate. Its pathway is cell wall biogenesis; peptidoglycan biosynthesis. Functionally, cell wall formation. Adds enolpyruvyl to UDP-N-acetylglucosamine. The sequence is that of UDP-N-acetylglucosamine 1-carboxyvinyltransferase 2 from Streptococcus pneumoniae (strain ATCC BAA-255 / R6).